Consider the following 496-residue polypeptide: Serine/threonine-protein kinase Sgk3 (496 aa).

One can recognise a PX domain in the interval 12–124 (SCPSVSIPSS…AFLQMDSPRH (113 aa)). Residues 121 to 157 (SPRHQSDPSEDEDERSTSKPHSTSRNINLGPTGNPHA) form a disordered region. Phosphoserine is present on residues serine 126 and serine 129. The span at 139 to 151 (KPHSTSRNINLGP) shows a compositional bias: polar residues. The 258-residue stretch at 162–419 (FDFLKVIGKG…FLEIQNHPFF (258 aa)) folds into the Protein kinase domain. Residues 168–176 (IGKGSFGKV) and lysine 191 contribute to the ATP site. A Nuclear localization signal motif is present at residues 195–205 (KKIVLNRKEQK). Aspartate 286 serves as the catalytic Proton acceptor. Threonine 320 is modified (phosphothreonine; by PDPK1). Residues 420 to 496 (ESLSWTDLVQ…YAPPSEDLFL (77 aa)) form the AGC-kinase C-terminal domain. The residue at position 486 (serine 486) is a Phosphoserine.

The protein belongs to the protein kinase superfamily. AGC Ser/Thr protein kinase family. In terms of assembly, interacts with GSK3B and FLII. Interacts with PDPK1 in a phosphorylation-dependent manner. In terms of processing, activated by phosphorylation on Ser-486 by an unknown kinase (may be mTORC2 but not confirmed), transforming it into a substrate for PDPK1 which then phosphorylates it on Thr-320. Widely expressed, predominantly in the heart, spleen and 7-day embryo.

It localises to the cytoplasmic vesicle. The protein localises to the early endosome. The protein resides in the recycling endosome. The catalysed reaction is L-seryl-[protein] + ATP = O-phospho-L-seryl-[protein] + ADP + H(+). The enzyme catalyses L-threonyl-[protein] + ATP = O-phospho-L-threonyl-[protein] + ADP + H(+). With respect to regulation, two specific sites, one in the kinase domain (Thr-320) and the other in the C-terminal regulatory region (Ser-486), need to be phosphorylated for its full activation. Its function is as follows. Serine/threonine-protein kinase which is involved in the regulation of a wide variety of ion channels, membrane transporters, cell growth, proliferation, survival and migration. Up-regulates Na(+) channels: SCNN1A/ENAC and SCN5A, K(+) channels: KCNA3/KV1.3, KCNE1, KCNQ1 and KCNH2/HERG, epithelial Ca(2+) channels: TRPV5 and TRPV6, chloride channel: BSND, creatine transporter: SLC6A8, Na(+)/dicarboxylate cotransporter: SLC13A2/NADC1, Na(+)-dependent phosphate cotransporter: SLC34A2/NAPI-2B, amino acid transporters: SLC1A5/ASCT2 and SLC6A19, glutamate transporters: SLC1A3/EAAT1, SLC1A6/EAAT4 and SLC1A7/EAAT5, glutamate receptors: GRIA1/GLUR1 and GRIK2/GLUR6, Na(+)/H(+) exchanger: SLC9A3/NHE3, and the Na(+)/K(+) ATPase. Plays a role in the regulation of renal tubular phosphate transport and bone density. Phosphorylates NEDD4L and GSK3B. Positively regulates ER transcription activity through phosphorylation of FLII. Negatively regulates the function of ITCH/AIP4 via its phosphorylation and thereby prevents CXCR4 from being efficiently sorted to lysosomes. This is Serine/threonine-protein kinase Sgk3 (Sgk3) from Mus musculus (Mouse).